We begin with the raw amino-acid sequence, 601 residues long: Glutathione-regulated potassium-efflux system protein KefB (601 aa).

13 helical membrane passes run 5–25, 29–49, 55–75, 87–107, 115–135, 152–172, 180–202, 207–227, 230–250, 268–288, 291–311, 324–344, and 356–376; these read SLLM…PLAA, IGAV…GLGF, EILH…GLEL, IFGV…GLLW, AAII…LQLM, VLLF…LLAG, WMKL…YLLR, FIAA…LVLG, LFME…GILL, GLLL…GVLY, ILEI…VLYL, LQFS…FSAA, and PLLL…MQGV. Residues 400-519 enclose the RCK N-terminal domain; sequence KPQVIVVGFG…AGVTQFSRET (120 aa).

It belongs to the monovalent cation:proton antiporter 2 (CPA2) transporter (TC 2.A.37) family. KefB subfamily. Interacts with the regulatory subunit KefG.

The protein localises to the cell inner membrane. In terms of biological role, pore-forming subunit of a potassium efflux system that confers protection against electrophiles. Catalyzes K(+)/H(+) antiport. The protein is Glutathione-regulated potassium-efflux system protein KefB of Erwinia tasmaniensis (strain DSM 17950 / CFBP 7177 / CIP 109463 / NCPPB 4357 / Et1/99).